We begin with the raw amino-acid sequence, 431 residues long: Argininosuccinate lyase (431 aa).

It belongs to the lyase 1 family. Argininosuccinate lyase subfamily.

The protein localises to the cytoplasm. It carries out the reaction 2-(N(omega)-L-arginino)succinate = fumarate + L-arginine. Its pathway is amino-acid biosynthesis; L-arginine biosynthesis; L-arginine from L-ornithine and carbamoyl phosphate: step 3/3. The chain is Argininosuccinate lyase from Stenotrophomonas maltophilia (strain K279a).